Consider the following 541-residue polypeptide: Solute carrier family 2, facilitated glucose transporter member 10 (541 aa).

Residues 1-15 are Cytoplasmic-facing; the sequence is MGHSPPVLPLCASVS. Residues 16 to 36 form a helical membrane-spanning segment; sequence LLGGLTFGYELAVISGALLPL. At 37–48 the chain is on the extracellular side; it reads QLDFGLSCLEQE. The chain crosses the membrane as a helical span at residues 49 to 69; that stretch reads FLVGSLLLGALLASLVGGFLI. The Cytoplasmic segment spans residues 70 to 77; it reads DCYGRKQA. The helical transmembrane segment at 78-98 threads the bilayer; the sequence is ILGSNLVLLAGSLTLGLAGSL. The Extracellular segment spans residues 99 to 106; it reads AWLVLGRA. The chain crosses the membrane as a helical span at residues 107–127; it reads VVGFAISLSSMACCIYVSELV. The Cytoplasmic portion of the chain corresponds to 128 to 134; sequence GPRQRGV. A helical transmembrane segment spans residues 135–155; the sequence is LVSLYEAGITVGILLSYALNY. The Extracellular segment spans residues 156–166; sequence ALAGTPWGWRH. Residues 167–187 traverse the membrane as a helical segment; sequence MFGWATAPAVLQSLSLLFLPA. Topologically, residues 188–233 are cytoplasmic; the sequence is GTDETATHKDLIPLQGGEAPKLGPGRPRYSFLDLFRARDNMRGRTT. The helical transmembrane segment at 234-254 threads the bilayer; it reads VGLGLVLFQQLTGQPNVLCYA. 242-243 is a binding site for D-glucose; the sequence is QQ. Residues 255–269 lie on the Extracellular side of the membrane; that stretch reads STIFSSVGFHGGSSA. A helical transmembrane segment spans residues 270–290; the sequence is VLASVGLGAVKVAATLTAMGL. Over 291-298 the chain is Cytoplasmic; that stretch reads VDRAGRRA. Residues 299-319 form a helical membrane-spanning segment; that stretch reads LLLAGCALMALSVSGIGLVSF. Topologically, residues 320–414 are extracellular; sequence AVPMDSGPSC…HALLRWTALL (95 aa). Asparagine 334 is a glycosylation site (N-linked (GlcNAc...) asparagine). The tract at residues 340-388 is disordered; sequence GLPGDSGLLQDSSLPPIPRTNEDQREPILSTAKKTKPHPRSGDPSAPPR. The helical transmembrane segment at 415 to 435 threads the bilayer; the sequence is CLMVFVSAFSFGFGPVTWLVL. Residue tryptophan 432 participates in D-glucose binding. The Cytoplasmic portion of the chain corresponds to 436 to 445; that stretch reads SEIYPVEIRG. Residues 446–466 traverse the membrane as a helical segment; that stretch reads RAFAFCNSFNWAANLFISLSF. Topologically, residues 467–476 are extracellular; that stretch reads LDLIGTIGLS. The helical transmembrane segment at 477 to 497 threads the bilayer; that stretch reads WTFLLYGLTAVLGLGFIYLFV. The Cytoplasmic portion of the chain corresponds to 498–541; it reads PETKGQSLAEIDQQFQKRRFTLSFGHRQNSTGIPYSRIEISAAS.

It belongs to the major facilitator superfamily. Sugar transporter (TC 2.A.1.1) family. Glucose transporter subfamily. In terms of tissue distribution, widely expressed; highest levels in liver and pancreas.

Its subcellular location is the endomembrane system. It is found in the cytoplasm. The protein resides in the perinuclear region. The catalysed reaction is D-glucose(out) = D-glucose(in). In terms of biological role, facilitative glucose transporter required for the development of the cardiovascular system. The protein is Solute carrier family 2, facilitated glucose transporter member 10 of Homo sapiens (Human).